A 72-amino-acid polypeptide reads, in one-letter code: Bowman-Birk type proteinase inhibitor (72 aa).

7 cysteine pairs are disulfide-bonded: Cys-8-Cys-61, Cys-9-Cys-24, Cys-12-Cys-57, Cys-14-Cys-22, Cys-31-Cys-38, Cys-35-Cys-50, and Cys-40-Cys-48.

The protein belongs to the Bowman-Birk serine protease inhibitor family.

Functionally, this inhibitor has two domains, each with separate antiprotease activity. 1 mole of inhibitor inhibits either 1 mole of trypsin or 2 moles of chymotrypsin, stoichiometrically. The sequence is that of Bowman-Birk type proteinase inhibitor from Vicia sativa subsp. nigra (Common vetch).